A 321-amino-acid chain; its full sequence is Putative ribose-phosphate pyrophosphokinase 2 (321 aa).

ATP is bound by residues 43-45 and 102-103; these read DGE and RQ. Residues histidine 136 and aspartate 176 each coordinate Mg(2+). D-ribose 5-phosphate is bound at residue aspartate 225.

It belongs to the ribose-phosphate pyrophosphokinase family. Class I subfamily. Homohexamer. Requires Mg(2+) as cofactor.

The protein localises to the cytoplasm. It carries out the reaction D-ribose 5-phosphate + ATP = 5-phospho-alpha-D-ribose 1-diphosphate + AMP + H(+). It participates in metabolic intermediate biosynthesis; 5-phospho-alpha-D-ribose 1-diphosphate biosynthesis; 5-phospho-alpha-D-ribose 1-diphosphate from D-ribose 5-phosphate (route I): step 1/1. Involved in the biosynthesis of the central metabolite phospho-alpha-D-ribosyl-1-pyrophosphate (PRPP) via the transfer of pyrophosphoryl group from ATP to 1-hydroxyl of ribose-5-phosphate (Rib-5-P). In Lactiplantibacillus plantarum (strain ATCC BAA-793 / NCIMB 8826 / WCFS1) (Lactobacillus plantarum), this protein is Putative ribose-phosphate pyrophosphokinase 2.